The following is a 731-amino-acid chain: 1,4-alpha-glucan branching enzyme GlgB (731 aa).

Residue D409 is the Nucleophile of the active site. The active-site Proton donor is E462.

It belongs to the glycosyl hydrolase 13 family. GlgB subfamily. Monomer.

It carries out the reaction Transfers a segment of a (1-&gt;4)-alpha-D-glucan chain to a primary hydroxy group in a similar glucan chain.. Its pathway is glycan biosynthesis; glycogen biosynthesis. Catalyzes the formation of the alpha-1,6-glucosidic linkages in glycogen by scission of a 1,4-alpha-linked oligosaccharide from growing alpha-1,4-glucan chains and the subsequent attachment of the oligosaccharide to the alpha-1,6 position. The sequence is that of 1,4-alpha-glucan branching enzyme GlgB from Roseobacter denitrificans (strain ATCC 33942 / OCh 114) (Erythrobacter sp. (strain OCh 114)).